Consider the following 691-residue polypeptide: Dynamin-1-like protein (691 aa).

The region spanning 22 to 301 (IIQLPQIAVV…LMHHIRDCLP (280 aa)) is the Dynamin-type G domain. The tract at residues 32 to 39 (GTQSSGKS) is G1 motif. 32 to 40 (GTQSSGKSS) contacts GTP. The segment at 58 to 60 (VTR) is G2 motif. Residues 145–148 (DLPG) form a G3 motif region. Residues 214 to 217 (TKLD) are G4 motif. Residues 214–220 (TKLDLMD) and 245–248 (NRSQ) each bind GTP. Positions 244-247 (VNRS) are G5 motif. The interval 343 to 488 (YCNTIEGTAK…NEMVHNLVAI (146 aa)) is middle domain. 2 stretches are compositionally biased toward basic and acidic residues: residues 522–531 (LPTSVPRDKM) and 551–563 (KKGDEGQGEEKTK). Residues 522-573 (LPTSVPRDKMAGGAQAEQEGGTGTWRGMLKKGDEGQGEEKTKLQSSIPASPQ) are disordered. The GED domain maps to 599 to 690 (CEVIERLIKS…VIAEIRETHL (92 aa)). Residues 609 to 623 (YFLIVRKNIQDSVPK) are important for homodimerization.

Belongs to the TRAFAC class dynamin-like GTPase superfamily. Dynamin/Fzo/YdjA family. In terms of assembly, homotetramer; dimerizes through the N-terminal GTP-middle region of one molecule binding to the GED domain of another DNM1L molecule. Oligomerizes in a GTP-dependent manner to form membrane-associated tubules with a spiral pattern.

The protein localises to the cytoplasm. It localises to the cytosol. The protein resides in the golgi apparatus. Its subcellular location is the endomembrane system. It is found in the mitochondrion outer membrane. The protein localises to the peroxisome. It localises to the membrane. The protein resides in the clathrin-coated pit. Its subcellular location is the cytoplasmic vesicle. It is found in the secretory vesicle. The protein localises to the synaptic vesicle membrane. It catalyses the reaction GTP + H2O = GDP + phosphate + H(+). Functions in mitochondrial and peroxisomal division. Mediates membrane fission through oligomerization into membrane-associated tubular structures that wrap around the scission site to constrict and sever the mitochondrial membrane through a GTP hydrolysis-dependent mechanism. The specific recruitment at scission sites is mediated by membrane receptors like MFF, MIEF1 and MIEF2 for mitochondrial membranes. While the recruitment by the membrane receptors is GTP-dependent, the following hydrolysis of GTP induces the dissociation from the receptors and allows DNM1L filaments to curl into closed rings that are probably sufficient to sever a double membrane. May play a role in the circadian control of mitochondrial ATP production. The protein is Dynamin-1-like protein of Danio rerio (Zebrafish).